The primary structure comprises 360 residues: Protein YIM1-1 (360 aa).

It belongs to the YIM1 family.

The protein localises to the lipid droplet. Its subcellular location is the mitochondrion. This chain is Protein YIM1-1 (YIM1-1), found in Lachancea thermotolerans (strain ATCC 56472 / CBS 6340 / NRRL Y-8284) (Yeast).